The chain runs to 296 residues: Phosphatidylserine decarboxylase proenzyme (296 aa).

Active-site charge relay system; for autoendoproteolytic cleavage activity residues include Asp-113, His-169, and Ser-256. Ser-256 functions as the Schiff-base intermediate with substrate; via pyruvic acid; for decarboxylase activity in the catalytic mechanism. Ser-256 is modified (pyruvic acid (Ser); by autocatalysis).

The protein belongs to the phosphatidylserine decarboxylase family. PSD-B subfamily. Prokaryotic type II sub-subfamily. In terms of assembly, heterodimer of a large membrane-associated beta subunit and a small pyruvoyl-containing alpha subunit. Pyruvate serves as cofactor. In terms of processing, is synthesized initially as an inactive proenzyme. Formation of the active enzyme involves a self-maturation process in which the active site pyruvoyl group is generated from an internal serine residue via an autocatalytic post-translational modification. Two non-identical subunits are generated from the proenzyme in this reaction, and the pyruvate is formed at the N-terminus of the alpha chain, which is derived from the carboxyl end of the proenzyme. The autoendoproteolytic cleavage occurs by a canonical serine protease mechanism, in which the side chain hydroxyl group of the serine supplies its oxygen atom to form the C-terminus of the beta chain, while the remainder of the serine residue undergoes an oxidative deamination to produce ammonia and the pyruvoyl prosthetic group on the alpha chain. During this reaction, the Ser that is part of the protease active site of the proenzyme becomes the pyruvoyl prosthetic group, which constitutes an essential element of the active site of the mature decarboxylase.

Its subcellular location is the cell membrane. The enzyme catalyses a 1,2-diacyl-sn-glycero-3-phospho-L-serine + H(+) = a 1,2-diacyl-sn-glycero-3-phosphoethanolamine + CO2. The protein operates within phospholipid metabolism; phosphatidylethanolamine biosynthesis; phosphatidylethanolamine from CDP-diacylglycerol: step 2/2. In terms of biological role, catalyzes the formation of phosphatidylethanolamine (PtdEtn) from phosphatidylserine (PtdSer). The chain is Phosphatidylserine decarboxylase proenzyme from Clostridium kluyveri (strain ATCC 8527 / DSM 555 / NBRC 12016 / NCIMB 10680 / K1).